The chain runs to 181 residues: MNTDKLALIKQSIKTIPDYPKPGIMFRDVTSLMEDPAAYQATIALFVERYKDLGVTKVVGTEARGFLFGAPLALELGVGFVPVRKPGKLPRETISESYELEYGHDMLEIHTDAIKPGDKVLVVDDLLATGGTIEATVKLIRQLGGEVEHAAFVISLPELGGEHRLAEMGLSLMTLCEFEGE.

It belongs to the purine/pyrimidine phosphoribosyltransferase family. Homodimer.

It is found in the cytoplasm. It catalyses the reaction AMP + diphosphate = 5-phospho-alpha-D-ribose 1-diphosphate + adenine. Its pathway is purine metabolism; AMP biosynthesis via salvage pathway; AMP from adenine: step 1/1. Catalyzes a salvage reaction resulting in the formation of AMP, that is energically less costly than de novo synthesis. In Shewanella loihica (strain ATCC BAA-1088 / PV-4), this protein is Adenine phosphoribosyltransferase.